The following is a 648-amino-acid chain: Translation factor GUF1 homolog, mitochondrial (648 aa).

In terms of domain architecture, tr-type G spans Glu55–Pro247. Residues Ala64–Ser71, Asp140–His144, and Asn194–Asp197 each bind GTP.

It belongs to the TRAFAC class translation factor GTPase superfamily. Classic translation factor GTPase family. LepA subfamily.

It is found in the mitochondrion inner membrane. The catalysed reaction is GTP + H2O = GDP + phosphate + H(+). In terms of biological role, promotes mitochondrial protein synthesis. May act as a fidelity factor of the translation reaction, by catalyzing a one-codon backward translocation of tRNAs on improperly translocated ribosomes. Binds to mitochondrial ribosomes in a GTP-dependent manner. In Oryza sativa subsp. indica (Rice), this protein is Translation factor GUF1 homolog, mitochondrial.